A 39-amino-acid polypeptide reads, in one-letter code: Phospholipase A2 (39 aa).

H36 is an active-site residue.

This sequence belongs to the phospholipase A2 family. Group III subfamily. Ca(2+) is required as a cofactor. In terms of tissue distribution, expressed by the venom gland.

Its subcellular location is the secreted. It catalyses the reaction a 1,2-diacyl-sn-glycero-3-phosphocholine + H2O = a 1-acyl-sn-glycero-3-phosphocholine + a fatty acid + H(+). In terms of biological role, PLA2 catalyzes the calcium-dependent hydrolysis of the 2-acyl groups in 3-sn-phosphoglycerides. The sequence is that of Phospholipase A2 from Heloderma horridum horridum (Mexican beaded lizard).